Here is a 638-residue protein sequence, read N- to C-terminus: MDRLKCPNFFKCRQKEKVTASSENFHVGENDENQERGNWSKKSDYLLSMVGYAVGLGNVWRFPYLTYTNGGGAFLIPYAIMLALAGLPLFFLECSLGQFASLGPVSVWRILPLFQGVGITMVLISVFVAIYYNVIIAYSLYYLFASFQSVLPWANCSSWADENCSRTPIVTGCNVSIGAGEMFMNISWVNTNNLTCLNGSEVFRPGQLPSEQYWDKVTLQRSSGMDETGVVVWYLALCLLLAWLIVGAALFKGIKSSGKVVYFTALFPYVVLLILLIRGATLEGASKGISYYIGAQSNFTKLREAEVWKDAATQIFYSLSVAWGGLVALSSYNKFNNNCYSDAIIVCLTNCLTSVFAGFAIFSILGHMAHISGKEVSQVVKSGFDLAFIAYPEALAQLPAGPFWSILFFFMLLTLGLDSQFASIETITTTFQDLFPKAMKRMRVPITLGCCLILFLLGLLCVTQAGIYWVHLIDHFCAGWGILIAAILEIAGIIWIYGGNRFIEDIEMMIGAKRWIFWLWWRACWFVITPILLSAILVWSLVKFHRPDYADIPYPDWGVALGWCMIIFCIIWIPIMAIIKIVQAEGNILQRIISCCRPASNWGPYLEKHRGERYRDMAEPAKETDHEIPTISGSTKPE.

Residues 1–44 lie on the Cytoplasmic side of the membrane; that stretch reads MDRLKCPNFFKCRQKEKVTASSENFHVGENDENQERGNWSKKSD. 3 consecutive transmembrane segments (helical) span residues 45-65, 72-92, and 110-130; these read YLLS…FPYL, GAFL…LFFL, and ILPL…FVAI. The Extracellular portion of the chain corresponds to 131 to 230; it reads YYNVIIAYSL…RSSGMDETGV (100 aa). Asn155, Asn163, Asn174, Asn185, Asn193, and Asn198 each carry an N-linked (GlcNAc...) asparagine glycan. 2 helical membrane passes run 231 to 251 and 257 to 277; these read VVWY…AALF and SGKV…ILLI. N-linked (GlcNAc...) asparagine glycosylation is present at Asn298. A run of 7 helical transmembrane segments spans residues 311-331, 344-364, 395-415, 453-473, 476-496, 524-544, and 559-579; these read AATQ…ALSS, IIVC…IFSI, LAQL…LLTL, ILFL…VHLI, FCAG…IIWI, CWFV…LVKF, and VALG…MAII. At 580–638 the chain is on the cytoplasmic side; that stretch reads KIVQAEGNILQRIISCCRPASNWGPYLEKHRGERYRDMAEPAKETDHEIPTISGSTKPE. Positions 618-628 are enriched in basic and acidic residues; the sequence is AEPAKETDHEI. The disordered stretch occupies residues 618 to 638; sequence AEPAKETDHEIPTISGSTKPE.

This sequence belongs to the sodium:neurotransmitter symporter (SNF) (TC 2.A.22) family. SLC6A14 subfamily. Expressed in the distal region of the intestinal tract: cecum and colon.

It is found in the membrane. It localises to the apical cell membrane. It carries out the reaction glycine(out) + chloride(out) + 2 Na(+)(out) = glycine(in) + chloride(in) + 2 Na(+)(in). The catalysed reaction is L-leucine(out) + chloride(out) + 2 Na(+)(out) = L-leucine(in) + chloride(in) + 2 Na(+)(in). It catalyses the reaction L-glutamine(out) + chloride(out) + 2 Na(+)(out) = L-glutamine(in) + chloride(in) + 2 Na(+)(in). The enzyme catalyses L-arginine(out) + chloride(out) + 2 Na(+)(out) = L-arginine(in) + chloride(in) + 2 Na(+)(in). It carries out the reaction (R)-carnitine(out) + chloride(out) + 2 Na(+)(out) = (R)-carnitine(in) + chloride(in) + 2 Na(+)(in). The catalysed reaction is O-propanoyl-(R)-carnitine(out) + chloride(out) + 2 Na(+)(out) = O-propanoyl-(R)-carnitine(in) + chloride(in) + 2 Na(+)(in). It catalyses the reaction L-isoleucine(out) + chloride(out) + 2 Na(+)(out) = L-isoleucine(in) + chloride(in) + 2 Na(+)(in). The enzyme catalyses L-methionine(out) + chloride(out) + 2 Na(+)(out) = L-methionine(in) + chloride(in) + 2 Na(+)(in). It carries out the reaction L-valine(out) + chloride(out) + 2 Na(+)(out) = L-valine(in) + chloride(in) + 2 Na(+)(in). The catalysed reaction is L-alanine(out) + chloride(out) + 2 Na(+)(out) = L-alanine(in) + chloride(in) + 2 Na(+)(in). It catalyses the reaction L-serine(out) + chloride(out) + 2 Na(+)(out) = L-serine(in) + chloride(in) + 2 Na(+)(in). The enzyme catalyses L-cysteine(out) + chloride(out) + 2 Na(+)(out) = L-cysteine(in) + chloride(in) + 2 Na(+)(in). It carries out the reaction L-asparagine(out) + chloride(out) + 2 Na(+)(out) = L-asparagine(in) + chloride(in) + 2 Na(+)(in). The catalysed reaction is L-threonine(out) + chloride(out) + 2 Na(+)(out) = L-threonine(in) + chloride(in) + 2 Na(+)(in). It catalyses the reaction L-phenylalanine(out) + chloride(out) + 2 Na(+)(out) = L-phenylalanine(in) + chloride(in) + 2 Na(+)(in). The enzyme catalyses L-tryptophan(out) + chloride(out) + 2 Na(+)(out) = L-tryptophan(in) + chloride(in) + 2 Na(+)(in). It carries out the reaction L-tyrosine(out) + chloride(out) + 2 Na(+)(out) = L-tyrosine(in) + chloride(in) + 2 Na(+)(in). The catalysed reaction is L-histidine(out) + chloride(out) + 2 Na(+)(out) = L-histidine(in) + chloride(in) + 2 Na(+)(in). It catalyses the reaction L-lysine(out) + chloride(out) + 2 Na(+)(out) = L-lysine(in) + chloride(in) + 2 Na(+)(in). The enzyme catalyses O-butanoyl-(R)-carnitine(out) + chloride(out) + 2 Na(+)(out) = O-butanoyl-(R)-carnitine(in) + chloride(in) + 2 Na(+)(in). Amino acid transporter that plays an important role in the absorption of amino acids in the intestinal tract. Mediates the uptake of a broad range of neutral and cationic amino acids (with the exception of proline) in a Na(+)/Cl(-)-dependent manner. Transports non-alpha-amino acids such as beta-alanine with low affinity, and has a higher affinity for dipolar and cationic amino acids such as leucine and lysine. Can also transport carnitine, butyrylcarnitine and propionylcarnitine coupled to the transmembrane gradients of Na(+) and Cl(-). This is Sodium- and chloride-dependent neutral and basic amino acid transporter B(0+) from Mus musculus (Mouse).